The following is a 258-amino-acid chain: Homeobox protein VENTX (258 aa).

Residues 1 to 32 are compositionally biased toward polar residues; sequence MRLSSSPPRGPQQLSSFGSVDWLSQSSCSGPT. Disordered stretches follow at residues 1 to 93 and 227 to 248; these read MRLS…RAPR and SHPP…PRGL. Positions 91-150 form a DNA-binding region, homeobox; that stretch reads APRVRTAFTMEQVRTLEGVFQHHQYLSPLERKRLAREMQLSEVQIKTWFQNRRMKHKRQM.

Expressed in bone marrow of patients recovering from chemotherapy. Also expressed in an erythroleukemia cell line.

It localises to the nucleus. May be involved in ventralization. The chain is Homeobox protein VENTX (VENTX) from Homo sapiens (Human).